The chain runs to 333 residues: Homeobox protein engrailed-2 (333 aa).

Disordered regions lie at residues 1 to 49 (MEEN…RALM), 95 to 206 (GRGG…GANL), and 223 to 250 (SDRPSSGPRSRKPKKKNPNKEDKRPRTA). Gly residues-rich tracts occupy residues 25–36 (PGGGSGGGGGSS) and 95–117 (GRGGGAGGEGGASGAEGGGGAGG). Low complexity-rich tracts occupy residues 142–151 (PLPAAGSDSP) and 191–200 (LSVSSDSDSS). The segment at residues 244–303 (DKRPRTAFTAEQLQRLKAEFQTNRYLTEQRRQSLAQELSLNESQIKIWFQNKRAKIKKAT) is a DNA-binding region (homeobox).

Belongs to the engrailed homeobox family.

The protein localises to the nucleus. The polypeptide is Homeobox protein engrailed-2 (EN2) (Homo sapiens (Human)).